The sequence spans 143 residues: Class I hydrophobin 20 (143 aa).

The first 22 residues, 1–22, serve as a signal peptide directing secretion; that stretch reads MLSHPMKLLFFVFALSALLAAA. Cystine bridges form between cysteine 54–cysteine 123, cysteine 62–cysteine 117, cysteine 63–cysteine 102, and cysteine 124–cysteine 137.

Belongs to the fungal hydrophobin family. Self-assembles to form functional amyloid fibrils called rodlets. Self-assembly into fibrillar rodlets occurs spontaneously at hydrophobic:hydrophilic interfaces and the rodlets further associate laterally to form amphipathic monolayers.

The protein resides in the secreted. Its subcellular location is the cell wall. Functionally, aerial growth, conidiation, and dispersal of filamentous fungi in the environment rely upon a capability of their secreting small amphipathic proteins called hydrophobins (HPBs) with low sequence identity. Class I can self-assemble into an outermost layer of rodlet bundles on aerial cell surfaces, conferring cellular hydrophobicity that supports fungal growth, development and dispersal; whereas Class II form highly ordered films at water-air interfaces through intermolecular interactions but contribute nothing to the rodlet structure. Hydph20 is a class I hydrophobin involved in mycelial growth. This Pleurotus ostreatus (strain PC15) (Oyster mushroom) protein is Class I hydrophobin 20.